Consider the following 380-residue polypeptide: Cytochrome b (380 aa).

Helical transmembrane passes span 33–53, 77–98, 113–133, and 178–198; these read FGSL…FLAM, WLIR…FLHV, WNMG…GYVL, and FFAF…VHLL. Residues H83 and H97 each contribute to the heme b site. Heme b-binding residues include H182 and H196. Residue H201 coordinates a ubiquinone. The next 4 helical transmembrane spans lie at 226-246, 288-308, 320-340, and 347-367; these read IKDF…TLFF, LGGV…PLLH, ITQI…WIGG, and FITI…IFMP.

It belongs to the cytochrome b family. The cytochrome bc1 complex contains 11 subunits: 3 respiratory subunits (MT-CYB, CYC1 and UQCRFS1), 2 core proteins (UQCRC1 and UQCRC2) and 6 low-molecular weight proteins (UQCRH/QCR6, UQCRB/QCR7, UQCRQ/QCR8, UQCR10/QCR9, UQCR11/QCR10 and a cleavage product of UQCRFS1). This cytochrome bc1 complex then forms a dimer. Heme b is required as a cofactor.

It is found in the mitochondrion inner membrane. In terms of biological role, component of the ubiquinol-cytochrome c reductase complex (complex III or cytochrome b-c1 complex) that is part of the mitochondrial respiratory chain. The b-c1 complex mediates electron transfer from ubiquinol to cytochrome c. Contributes to the generation of a proton gradient across the mitochondrial membrane that is then used for ATP synthesis. This is Cytochrome b (MT-CYB) from Microtus oregoni (Creeping vole).